Consider the following 277-residue polypeptide: Large ribosomal subunit protein uL2 (277 aa).

Positions 219 to 277 (TVRGSVMNPNDHPHGGGEGKAPVGRKAPSTPWGKPALGLKTRNKKAKSDKLIVRRRNEK) are disordered. The segment covering 264–277 (AKSDKLIVRRRNEK) has biased composition (basic and acidic residues).

It belongs to the universal ribosomal protein uL2 family. In terms of assembly, part of the 50S ribosomal subunit. Forms a bridge to the 30S subunit in the 70S ribosome.

In terms of biological role, one of the primary rRNA binding proteins. Required for association of the 30S and 50S subunits to form the 70S ribosome, for tRNA binding and peptide bond formation. It has been suggested to have peptidyltransferase activity; this is somewhat controversial. Makes several contacts with the 16S rRNA in the 70S ribosome. This Streptococcus sanguinis (strain SK36) protein is Large ribosomal subunit protein uL2.